The primary structure comprises 338 residues: Ketol-acid reductoisomerase (NADP(+)) (338 aa).

The KARI N-terminal Rossmann domain occupies Met-1–Thr-181. NADP(+)-binding positions include Tyr-24–Gln-27, Arg-47, Ser-50, Thr-52, and Asp-82–Gln-85. The active site involves His-107. NADP(+) is bound at residue Gly-133. In terms of domain architecture, KARI C-terminal knotted spans Thr-182 to Ile-327. Mg(2+)-binding residues include Asp-190, Glu-194, Glu-226, and Glu-230. Ser-251 provides a ligand contact to substrate.

It belongs to the ketol-acid reductoisomerase family. The cofactor is Mg(2+).

The enzyme catalyses (2R)-2,3-dihydroxy-3-methylbutanoate + NADP(+) = (2S)-2-acetolactate + NADPH + H(+). It catalyses the reaction (2R,3R)-2,3-dihydroxy-3-methylpentanoate + NADP(+) = (S)-2-ethyl-2-hydroxy-3-oxobutanoate + NADPH + H(+). Its pathway is amino-acid biosynthesis; L-isoleucine biosynthesis; L-isoleucine from 2-oxobutanoate: step 2/4. It functions in the pathway amino-acid biosynthesis; L-valine biosynthesis; L-valine from pyruvate: step 2/4. In terms of biological role, involved in the biosynthesis of branched-chain amino acids (BCAA). Catalyzes an alkyl-migration followed by a ketol-acid reduction of (S)-2-acetolactate (S2AL) to yield (R)-2,3-dihydroxy-isovalerate. In the isomerase reaction, S2AL is rearranged via a Mg-dependent methyl migration to produce 3-hydroxy-3-methyl-2-ketobutyrate (HMKB). In the reductase reaction, this 2-ketoacid undergoes a metal-dependent reduction by NADPH to yield (R)-2,3-dihydroxy-isovalerate. The polypeptide is Ketol-acid reductoisomerase (NADP(+)) (Pseudomonas aeruginosa (strain LESB58)).